Here is a 232-residue protein sequence, read N- to C-terminus: Enolase-phosphatase E1 (232 aa).

This sequence belongs to the HAD-like hydrolase superfamily. MasA/MtnC family. As to quaternary structure, monomer. It depends on Mg(2+) as a cofactor.

It carries out the reaction 5-methylsulfanyl-2,3-dioxopentyl phosphate + H2O = 1,2-dihydroxy-5-(methylsulfanyl)pent-1-en-3-one + phosphate. Its pathway is amino-acid biosynthesis; L-methionine biosynthesis via salvage pathway; L-methionine from S-methyl-5-thio-alpha-D-ribose 1-phosphate: step 3/6. It functions in the pathway amino-acid biosynthesis; L-methionine biosynthesis via salvage pathway; L-methionine from S-methyl-5-thio-alpha-D-ribose 1-phosphate: step 4/6. Bifunctional enzyme that catalyzes the enolization of 2,3-diketo-5-methylthiopentyl-1-phosphate (DK-MTP-1-P) into the intermediate 2-hydroxy-3-keto-5-methylthiopentenyl-1-phosphate (HK-MTPenyl-1-P), which is then dephosphorylated to form the acireductone 1,2-dihydroxy-3-keto-5-methylthiopentene (DHK-MTPene). This chain is Enolase-phosphatase E1, found in Xanthomonas oryzae pv. oryzae (strain KACC10331 / KXO85).